A 485-amino-acid chain; its full sequence is Ribulose bisphosphate carboxylase large chain (485 aa).

The substrate site is built by asparagine 124 and threonine 174. The active-site Proton acceptor is the lysine 176. Position 178 (lysine 178) interacts with substrate. Mg(2+) is bound by residues lysine 202, aspartate 204, and glutamate 205. Position 202 is an N6-carboxylysine (lysine 202). Catalysis depends on histidine 294, which acts as the Proton acceptor. The substrate site is built by arginine 295, histidine 327, and serine 379.

Belongs to the RuBisCO large chain family. Type I subfamily. In terms of assembly, heterohexadecamer of 8 large chains and 8 small chains. It depends on Mg(2+) as a cofactor.

It catalyses the reaction 2 (2R)-3-phosphoglycerate + 2 H(+) = D-ribulose 1,5-bisphosphate + CO2 + H2O. It carries out the reaction D-ribulose 1,5-bisphosphate + O2 = 2-phosphoglycolate + (2R)-3-phosphoglycerate + 2 H(+). Its function is as follows. RuBisCO catalyzes two reactions: the carboxylation of D-ribulose 1,5-bisphosphate, the primary event in carbon dioxide fixation, as well as the oxidative fragmentation of the pentose substrate. Both reactions occur simultaneously and in competition at the same active site. The sequence is that of Ribulose bisphosphate carboxylase large chain from Rhodopseudomonas palustris (strain TIE-1).